A 241-amino-acid polypeptide reads, in one-letter code: Agamous-like MADS-box protein AP1 (241 aa).

The 61-residue stretch at 1-61 (MGRGRVQLKR…GKLFEYSTDS (61 aa)) folds into the MADS-box domain. The K-box domain occupies 88–178 (QGNWSLEYSK…AKEIKEKEKT (91 aa)).

In terms of tissue distribution, expressed in tendrils and flowers.

Its subcellular location is the nucleus. Functionally, probable transcription factor involved in flower development. The polypeptide is Agamous-like MADS-box protein AP1 (Vitis vinifera (Grape)).